The following is a 204-amino-acid chain: N-(5'-phosphoribosyl)anthranilate isomerase (204 aa).

The protein belongs to the TrpF family.

It carries out the reaction N-(5-phospho-beta-D-ribosyl)anthranilate = 1-(2-carboxyphenylamino)-1-deoxy-D-ribulose 5-phosphate. Its pathway is amino-acid biosynthesis; L-tryptophan biosynthesis; L-tryptophan from chorismate: step 3/5. This chain is N-(5'-phosphoribosyl)anthranilate isomerase, found in Desulforudis audaxviator (strain MP104C).